The following is a 384-amino-acid chain: Galactokinase (384 aa).

35-38 (EHTD) contributes to the substrate binding site. Residues S69 and 125 to 131 (GAGLSSS) contribute to the ATP site. The Mg(2+) site is built by S131 and E163. D175 functions as the Proton acceptor in the catalytic mechanism. Y224 lines the substrate pocket.

The protein belongs to the GHMP kinase family. GalK subfamily.

It localises to the cytoplasm. The catalysed reaction is alpha-D-galactose + ATP = alpha-D-galactose 1-phosphate + ADP + H(+). The protein operates within carbohydrate metabolism; galactose metabolism. In terms of biological role, catalyzes the transfer of the gamma-phosphate of ATP to D-galactose to form alpha-D-galactose-1-phosphate (Gal-1-P). The chain is Galactokinase from Aliivibrio fischeri (strain MJ11) (Vibrio fischeri).